A 77-amino-acid polypeptide reads, in one-letter code: MELVLGLKYIAVALLIGFGAIGTAVGFGNMGGKFLEACARQPELAPSLQVKMFILAGLIDAVAMIGVGIAMVLLFVL.

The next 2 helical transmembrane spans lie at 10-30 (IAVALLIGFGAIGTAVGFGNM) and 57-77 (GLIDAVAMIGVGIAMVLLFVL).

Belongs to the ATPase C chain family. In terms of assembly, F-type ATPases have 2 components, F(1) - the catalytic core - and F(0) - the membrane proton channel. F(1) has five subunits: alpha(3), beta(3), gamma(1), delta(1), epsilon(1). F(0) has three main subunits: a(1), b(2) and c(10-14). The alpha and beta chains form an alternating ring which encloses part of the gamma chain. F(1) is attached to F(0) by a central stalk formed by the gamma and epsilon chains, while a peripheral stalk is formed by the delta and b chains.

The protein resides in the cell inner membrane. Its function is as follows. F(1)F(0) ATP synthase produces ATP from ADP in the presence of a proton or sodium gradient. F-type ATPases consist of two structural domains, F(1) containing the extramembraneous catalytic core and F(0) containing the membrane proton channel, linked together by a central stalk and a peripheral stalk. During catalysis, ATP synthesis in the catalytic domain of F(1) is coupled via a rotary mechanism of the central stalk subunits to proton translocation. Key component of the F(0) channel; it plays a direct role in translocation across the membrane. A homomeric c-ring of between 10-14 subunits forms the central stalk rotor element with the F(1) delta and epsilon subunits. The polypeptide is ATP synthase subunit c (Pseudoalteromonas translucida (strain TAC 125)).